Here is a 164-residue protein sequence, read N- to C-terminus: SsrA-binding protein (164 aa).

This sequence belongs to the SmpB family.

It localises to the cytoplasm. Its function is as follows. Required for rescue of stalled ribosomes mediated by trans-translation. Binds to transfer-messenger RNA (tmRNA), required for stable association of tmRNA with ribosomes. tmRNA and SmpB together mimic tRNA shape, replacing the anticodon stem-loop with SmpB. tmRNA is encoded by the ssrA gene; the 2 termini fold to resemble tRNA(Ala) and it encodes a 'tag peptide', a short internal open reading frame. During trans-translation Ala-aminoacylated tmRNA acts like a tRNA, entering the A-site of stalled ribosomes, displacing the stalled mRNA. The ribosome then switches to translate the ORF on the tmRNA; the nascent peptide is terminated with the 'tag peptide' encoded by the tmRNA and targeted for degradation. The ribosome is freed to recommence translation, which seems to be the essential function of trans-translation. The polypeptide is SsrA-binding protein (Synechococcus sp. (strain CC9311)).